The following is a 200-amino-acid chain: Imidazole glycerol phosphate synthase subunit HisH (200 aa).

The 199-residue stretch at 2–200 (KVAIVEYGVG…LGEVLTGASR (199 aa)) folds into the Glutamine amidotransferase type-1 domain. C79 (nucleophile) is an active-site residue. Catalysis depends on residues H179 and E181.

As to quaternary structure, heterodimer of HisH and HisF.

It is found in the cytoplasm. It catalyses the reaction 5-[(5-phospho-1-deoxy-D-ribulos-1-ylimino)methylamino]-1-(5-phospho-beta-D-ribosyl)imidazole-4-carboxamide + L-glutamine = D-erythro-1-(imidazol-4-yl)glycerol 3-phosphate + 5-amino-1-(5-phospho-beta-D-ribosyl)imidazole-4-carboxamide + L-glutamate + H(+). It carries out the reaction L-glutamine + H2O = L-glutamate + NH4(+). The protein operates within amino-acid biosynthesis; L-histidine biosynthesis; L-histidine from 5-phospho-alpha-D-ribose 1-diphosphate: step 5/9. Functionally, IGPS catalyzes the conversion of PRFAR and glutamine to IGP, AICAR and glutamate. The HisH subunit catalyzes the hydrolysis of glutamine to glutamate and ammonia as part of the synthesis of IGP and AICAR. The resulting ammonia molecule is channeled to the active site of HisF. The sequence is that of Imidazole glycerol phosphate synthase subunit HisH from Methanopyrus kandleri (strain AV19 / DSM 6324 / JCM 9639 / NBRC 100938).